The following is a 124-amino-acid chain: Small ribosomal subunit protein uS12 (124 aa).

The segment at 1–20 is disordered; sequence MATISQLVRNPRKDKVQKTS. 3-methylthioaspartic acid is present on Asp-89. The disordered stretch occupies residues 104 to 124; the sequence is TSGVTARRKGRSKYGAKRPKA. Basic residues predominate over residues 109-124; sequence ARRKGRSKYGAKRPKA.

It belongs to the universal ribosomal protein uS12 family. In terms of assembly, part of the 30S ribosomal subunit. Contacts proteins S8 and S17. May interact with IF1 in the 30S initiation complex.

With S4 and S5 plays an important role in translational accuracy. Functionally, interacts with and stabilizes bases of the 16S rRNA that are involved in tRNA selection in the A site and with the mRNA backbone. Located at the interface of the 30S and 50S subunits, it traverses the body of the 30S subunit contacting proteins on the other side and probably holding the rRNA structure together. The combined cluster of proteins S8, S12 and S17 appears to hold together the shoulder and platform of the 30S subunit. This is Small ribosomal subunit protein uS12 from Psychromonas ingrahamii (strain DSM 17664 / CCUG 51855 / 37).